A 543-amino-acid polypeptide reads, in one-letter code: Chaperonin GroEL (543 aa).

Residues 29–32 (TLGP), 86–90 (DGTTT), Gly413, 476–478 (NAA), and Asp492 contribute to the ATP site.

It belongs to the chaperonin (HSP60) family. Forms a cylinder of 14 subunits composed of two heptameric rings stacked back-to-back. Interacts with the co-chaperonin GroES.

It is found in the cytoplasm. The catalysed reaction is ATP + H2O + a folded polypeptide = ADP + phosphate + an unfolded polypeptide.. Its function is as follows. Together with its co-chaperonin GroES, plays an essential role in assisting protein folding. The GroEL-GroES system forms a nano-cage that allows encapsulation of the non-native substrate proteins and provides a physical environment optimized to promote and accelerate protein folding. In Streptococcus pyogenes serotype M49 (strain NZ131), this protein is Chaperonin GroEL.